Reading from the N-terminus, the 551-residue chain is Cation/acetate symporter ActP (551 aa).

The next 13 membrane-spanning stretches (helical) occupy residues 34–54 (IEAI…TYWA), 77–97 (GLAI…SALV), 104–124 (GLIY…LIAE), 150–170 (LSAC…MVGA), 184–204 (VAVV…GMLA), 207–227 (WVQI…ALMV), 263–283 (ISAL…PHIL), 304–324 (GFIG…ILLV), 356–376 (FFLG…VAGL), 406–426 (VSKI…ILFE), 430–450 (IAFM…PIIF), 469–489 (LGLL…VTIL), and 498–518 (YEYP…FFSI).

Belongs to the sodium:solute symporter (SSF) (TC 2.A.21) family.

The protein localises to the cell inner membrane. Functionally, transports acetate. The polypeptide is Cation/acetate symporter ActP (Yersinia enterocolitica serotype O:8 / biotype 1B (strain NCTC 13174 / 8081)).